Reading from the N-terminus, the 85-residue chain is Small ribosomal subunit protein bS16 (85 aa).

The protein belongs to the bacterial ribosomal protein bS16 family.

The sequence is that of Small ribosomal subunit protein bS16 from Rubrobacter xylanophilus (strain DSM 9941 / JCM 11954 / NBRC 16129 / PRD-1).